The chain runs to 94 residues: ATP synthase F(0) complex subunit f, mitochondrial (94 aa).

Position 2 is an N-acetylalanine (alanine 2). Serine 3 is subject to Phosphoserine. Residue lysine 22 is modified to N6-acetyllysine. The chain crosses the membrane as a helical span at residues 68 to 85 (MVLACYVLFSYSFSYKHL).

Belongs to the ATPase F chain family. In terms of assembly, component of the ATP synthase complex composed at least of ATP5F1A/subunit alpha, ATP5F1B/subunit beta, ATP5MC1/subunit c (homooctomer), MT-ATP6/subunit a, MT-ATP8/subunit 8, ATP5ME/subunit e, ATP5MF/subunit f, ATP5MG/subunit g, ATP5MK/subunit k, ATP5MJ/subunit j, ATP5F1C/subunit gamma, ATP5F1D/subunit delta, ATP5F1E/subunit epsilon, ATP5PF/subunit F6, ATP5PB/subunit b, ATP5PD/subunit d, ATP5PO/subunit OSCP. ATP synthase complex consists of a soluble F(1) head domain (subunits alpha(3) and beta(3)) - the catalytic core - and a membrane F(0) domain - the membrane proton channel (subunits c, a, 8, e, f, g, k and j). These two domains are linked by a central stalk (subunits gamma, delta, and epsilon) rotating inside the F1 region and a stationary peripheral stalk (subunits F6, b, d, and OSCP).

The protein resides in the mitochondrion. It localises to the mitochondrion inner membrane. Functionally, subunit f, of the mitochondrial membrane ATP synthase complex (F(1)F(0) ATP synthase or Complex V) that produces ATP from ADP in the presence of a proton gradient across the membrane which is generated by electron transport complexes of the respiratory chain. ATP synthase complex consist of a soluble F(1) head domain - the catalytic core - and a membrane F(1) domain - the membrane proton channel. These two domains are linked by a central stalk rotating inside the F(1) region and a stationary peripheral stalk. During catalysis, ATP synthesis in the catalytic domain of F(1) is coupled via a rotary mechanism of the central stalk subunits to proton translocation. In vivo, can only synthesize ATP although its ATP hydrolase activity can be activated artificially in vitro. Part of the complex F(0) domain. This Pongo abelii (Sumatran orangutan) protein is ATP synthase F(0) complex subunit f, mitochondrial.